A 449-amino-acid chain; its full sequence is Glutamate--tRNA ligase (449 aa).

The short motif at 10 to 20 (PSPTGHLHIGN) is the 'HIGH' region element. Positions 214-218 (KLSKR) match the 'KMSKS' region motif. Lys217 serves as a coordination point for ATP.

The protein belongs to the class-I aminoacyl-tRNA synthetase family. Glutamate--tRNA ligase type 1 subfamily. In terms of assembly, monomer.

It localises to the cytoplasm. It catalyses the reaction tRNA(Glu) + L-glutamate + ATP = L-glutamyl-tRNA(Glu) + AMP + diphosphate. In terms of biological role, catalyzes the attachment of glutamate to tRNA(Glu) in a two-step reaction: glutamate is first activated by ATP to form Glu-AMP and then transferred to the acceptor end of tRNA(Glu). The polypeptide is Glutamate--tRNA ligase (Acholeplasma laidlawii (strain PG-8A)).